A 92-amino-acid chain; its full sequence is Small ribosomal subunit protein uS19 (92 aa).

The protein belongs to the universal ribosomal protein uS19 family.

In terms of biological role, protein S19 forms a complex with S13 that binds strongly to the 16S ribosomal RNA. The protein is Small ribosomal subunit protein uS19 of Bradyrhizobium sp. (strain BTAi1 / ATCC BAA-1182).